Consider the following 324-residue polypeptide: Anthranilate phosphoribosyltransferase (324 aa).

Residues Gly-72, 75–76, Thr-80, 82–85, 99–107, and Ser-111 each bind 5-phospho-alpha-D-ribose 1-diphosphate; these read GD, NVST, and KHGNVSVTS. Residue Gly-72 coordinates anthranilate. Mg(2+) is bound at residue Ser-84. Asn-102 provides a ligand contact to anthranilate. An anthranilate-binding site is contributed by Arg-157. Residues Asp-215 and Glu-216 each contribute to the Mg(2+) site.

This sequence belongs to the anthranilate phosphoribosyltransferase family. Homodimer. Requires Mg(2+) as cofactor.

The catalysed reaction is N-(5-phospho-beta-D-ribosyl)anthranilate + diphosphate = 5-phospho-alpha-D-ribose 1-diphosphate + anthranilate. Its pathway is amino-acid biosynthesis; L-tryptophan biosynthesis; L-tryptophan from chorismate: step 2/5. Its function is as follows. Catalyzes the transfer of the phosphoribosyl group of 5-phosphorylribose-1-pyrophosphate (PRPP) to anthranilate to yield N-(5'-phosphoribosyl)-anthranilate (PRA). This chain is Anthranilate phosphoribosyltransferase, found in Pyrococcus furiosus (strain ATCC 43587 / DSM 3638 / JCM 8422 / Vc1).